A 329-amino-acid chain; its full sequence is tRNA uridine(34) hydroxylase (329 aa).

The Rhodanese domain maps to 123–217 (SDPDVILVDT…YLEEVPEEES (95 aa)). Residue cysteine 177 is the Cysteine persulfide intermediate of the active site. The segment at 285 to 329 (REKQVQLSNARGETHVGGDAAHLIDQRKKEKLAHKEQQRSGKKAK) is disordered. Over residues 296-323 (GETHVGGDAAHLIDQRKKEKLAHKEQQR) the composition is skewed to basic and acidic residues.

The protein belongs to the TrhO family.

The catalysed reaction is uridine(34) in tRNA + AH2 + O2 = 5-hydroxyuridine(34) in tRNA + A + H2O. In terms of biological role, catalyzes oxygen-dependent 5-hydroxyuridine (ho5U) modification at position 34 in tRNAs. The protein is tRNA uridine(34) hydroxylase of Vibrio atlanticus (strain LGP32) (Vibrio splendidus (strain Mel32)).